The following is a 507-amino-acid chain: Cytochrome P450 monooxygenase cloA (507 aa).

A helical membrane pass occupies residues 15–35 (WTWILLTTCIALTSPLVLKGI). The N-linked (GlcNAc...) asparagine glycan is linked to Asn-247. Cys-450 contacts heme.

This sequence belongs to the cytochrome P450 family. It depends on heme as a cofactor.

The protein localises to the membrane. The protein operates within alkaloid biosynthesis; ergot alkaloid biosynthesis. In terms of biological role, cytochrome P450 monooxygenase; part of the gene cluster that mediates the biosynthesis of fungal ergot alkaloid. DmaW catalyzes the first step of ergot alkaloid biosynthesis by condensing dimethylallyl diphosphate (DMAP) and tryptophan to form 4-dimethylallyl-L-tryptophan. The second step is catalyzed by the methyltransferase easF that methylates 4-dimethylallyl-L-tryptophan in the presence of S-adenosyl-L-methionine, resulting in the formation of 4-dimethylallyl-L-abrine. The catalase easC and the FAD-dependent oxidoreductase easE then transform 4-dimethylallyl-L-abrine to chanoclavine-I which is further oxidized by easD in the presence of NAD(+), resulting in the formation of chanoclavine-I aldehyde. Agroclavine dehydrogenase easG then mediates the conversion of chanoclavine-I aldehyde to agroclavine via a non-enzymatic adduct reaction: the substrate is an iminium intermediate that is formed spontaneously from chanoclavine-I aldehyde in the presence of glutathione. The presence of easA is not required to complete this reaction. Further conversion of agroclavine to paspalic acid is a two-step process involving oxidation of agroclavine to elymoclavine and of elymoclavine to paspalic acid, the second step being performed by the elymoclavine oxidase cloA. Paspalic acid is then further converted to D-lysergic acid. Ergopeptines are assembled from D-lysergic acid and three different amino acids by the D-lysergyl-peptide-synthetases composed each of a monomudular and a trimodular nonribosomal peptide synthetase subunit. LpsB and lpsC encode the monomodular subunits responsible for D-lysergic acid activation and incorporation into the ergopeptine backbone. LpsA1 and A2 subunits encode the trimodular nonribosomal peptide synthetase assembling the tripeptide portion of ergopeptines. LpsA1 is responsible for formation of the major ergopeptine, ergotamine, and lpsA2 for alpha-ergocryptine, the minor ergopeptine of the total alkaloid mixture elaborated by C.purpurea. D-lysergyl-tripeptides are assembled by the nonribosomal peptide synthetases and released as N-(D-lysergyl-aminoacyl)-lactams. Cyclolization of the D-lysergyl-tripeptides is performed by the Fe(2+)/2-ketoglutarate-dependent dioxygenase easH which introduces a hydroxyl group into N-(D-lysergyl-aminoacyl)-lactam at alpha-C of the aminoacyl residue followed by spontaneous condensation with the terminal lactam carbonyl group. This chain is Cytochrome P450 monooxygenase cloA, found in Claviceps purpurea (Ergot fungus).